The following is a 64-amino-acid chain: Large ribosomal subunit protein eL37 (64 aa).

Residues 1–6 form a C4-type zinc finger; it reads GRCSAC. Residues cysteine 3 and cysteine 6 each coordinate Zn(2+).

This sequence belongs to the eukaryotic ribosomal protein eL37 family. Zn(2+) is required as a cofactor.

Functionally, binds to the 23S rRNA. The protein is Large ribosomal subunit protein eL37 (RPL37) of Solanum lycopersicum (Tomato).